We begin with the raw amino-acid sequence, 176 residues long: Photosystem I assembly protein Ycf4 (176 aa).

A run of 2 helical transmembrane segments spans residues 22–42 and 48–68; these read FVWA…GTAS and LIAF…GLFI.

This sequence belongs to the Ycf4 family.

It localises to the plastid thylakoid membrane. In terms of biological role, seems to be required for the assembly of the photosystem I complex. The sequence is that of Photosystem I assembly protein Ycf4 from Cuscuta gronovii (Common dodder).